A 386-amino-acid chain; its full sequence is Prostatic acid phosphatase (386 aa).

A signal peptide spans 1 to 32; the sequence is MRAAPLLLARAASLSLGFLFLLFFWLDRSVLA. R43 lines the substrate pocket. H44 functions as the Nucleophile in the catalytic mechanism. Residue R47 coordinates substrate. N-linked (GlcNAc...) asparagine glycosylation occurs at N94. R111 contacts substrate. 3 disulfide bridges follow: C161/C372, C215/C313, and C347/C351. N-linked (GlcNAc...) asparagine glycosylation occurs at N220. Position 289 (H289) interacts with substrate. D290 serves as the catalytic Proton donor. N333 carries N-linked (GlcNAc...) asparagine glycosylation.

This sequence belongs to the histidine acid phosphatase family. In terms of assembly, homodimer; dimer formation is required for phosphatase activity. Post-translationally, N-glycosylated. High mannose content, partially sialylated and fucosylated biantennary complex. Also fucosylated with partially sialylated triantennary complex oligosaccharides. In terms of processing, proteolytically cleaved in seminal fluid to produce several peptides. Peptide PAPf39, the most prominent, forms amyloid beta-sheet fibrils, SEVI (semen-derived enhancer of viral infection). As to expression, highly expressed in the prostate, restricted to glandular and ductal epithelial cells. Also expressed in bladder, kidney, pancreas, lung, cervix, testis and ovary. Weak expression in a subset of pancreatic islet cells, squamous epithelia, the pilosebaceous unit, colonic neuroendocrine cells and skin adnexal structures. Low expression in prostate carcinoma cells and tissues. In terms of tissue distribution, widely expressed. Expressed in the sarcolemma of skeletal muscle.

The protein resides in the secreted. The protein localises to the cell membrane. It is found in the lysosome membrane. Its subcellular location is the nucleus. It localises to the cytoplasm. The protein resides in the cytosol. The catalysed reaction is a phosphate monoester + H2O = an alcohol + phosphate. The enzyme catalyses 1-(9Z-octadecenoyl)-sn-glycero-3-phosphate + H2O = 1-(9Z-octadecenoyl)-sn-glycerol + phosphate. It catalyses the reaction a ribonucleoside 5'-phosphate + H2O = a ribonucleoside + phosphate. It carries out the reaction O-phospho-L-tyrosyl-[protein] + H2O = L-tyrosyl-[protein] + phosphate. Its activity is regulated as follows. Phosphatase activity inhibited by L(+)-tartrate, and by its derivative, alpha-benzylaminobenzylphosphonic acid. Its function is as follows. A non-specific tyrosine phosphatase that dephosphorylates a diverse number of substrates under acidic conditions (pH 4-6) including alkyl, aryl, and acyl orthophosphate monoesters and phosphorylated proteins. Has lipid phosphatase activity and inactivates lysophosphatidic acid in seminal plasma. Tyrosine phosphatase that acts as a tumor suppressor of prostate cancer through dephosphorylation of ERBB2 and deactivation of MAPK-mediated signaling. In addition to its tyrosine phosphatase activity has ecto-5'-nucleotidase activity in dorsal root ganglion (DRG) neurons. Generates adenosine from AMP which acts as a pain suppressor. In terms of biological role, (Microbial infection) Forms amyloid beta-sheet fibrils in semen. These fibrils, termed SEVI (semen-derived enhancer of viral infection) capture HIV virions, attach them to target cells and enhance infection. SEVI amyloid fibrils are degraded by polyphenol epigallocatechin-3-gallate (EGCG), a constituent of green tea. Target cell attachment and enhancement of HIV infection is inhibited by surfen. Also similarly boosts XMRV (xenotropic murine leukemia virus-related virus) infection. This is Prostatic acid phosphatase from Homo sapiens (Human).